The sequence spans 252 residues: Probable transcriptional regulatory protein THA_1246 (252 aa).

It belongs to the TACO1 family.

The protein localises to the cytoplasm. The protein is Probable transcriptional regulatory protein THA_1246 of Thermosipho africanus (strain TCF52B).